The primary structure comprises 360 residues: Alanine racemase (360 aa).

Catalysis depends on K36, which acts as the Proton acceptor; specific for D-alanine. K36 carries the post-translational modification N6-(pyridoxal phosphate)lysine. R132 lines the substrate pocket. Y256 serves as the catalytic Proton acceptor; specific for L-alanine. Residue M304 participates in substrate binding.

The protein belongs to the alanine racemase family. The cofactor is pyridoxal 5'-phosphate.

It carries out the reaction L-alanine = D-alanine. It functions in the pathway amino-acid biosynthesis; D-alanine biosynthesis; D-alanine from L-alanine: step 1/1. Its function is as follows. Catalyzes the interconversion of L-alanine and D-alanine. May also act on other amino acids. In Pasteurella multocida (strain Pm70), this protein is Alanine racemase (alr).